Here is a 122-residue protein sequence, read N- to C-terminus: Large ribosomal subunit protein uL18 (122 aa).

It belongs to the universal ribosomal protein uL18 family. In terms of assembly, part of the 50S ribosomal subunit; part of the 5S rRNA/L5/L18/L25 subcomplex. Contacts the 5S and 23S rRNAs.

Its function is as follows. This is one of the proteins that bind and probably mediate the attachment of the 5S RNA into the large ribosomal subunit, where it forms part of the central protuberance. The sequence is that of Large ribosomal subunit protein uL18 from Desulfitobacterium hafniense (strain DSM 10664 / DCB-2).